The following is a 430-amino-acid chain: Adenosylhomocysteinase (430 aa).

Substrate is bound by residues T56, D131, and E156. NAD(+) is bound at residue 157 to 159 (TTT). Substrate-binding residues include K186 and D190. Residues N191, 220–225 (GFGDVG), E243, N278, 299–301 (IGH), and N344 contribute to the NAD(+) site.

It belongs to the adenosylhomocysteinase family. NAD(+) is required as a cofactor.

Its subcellular location is the cytoplasm. It carries out the reaction S-adenosyl-L-homocysteine + H2O = L-homocysteine + adenosine. It participates in amino-acid biosynthesis; L-homocysteine biosynthesis; L-homocysteine from S-adenosyl-L-homocysteine: step 1/1. Its function is as follows. May play a key role in the regulation of the intracellular concentration of adenosylhomocysteine. This chain is Adenosylhomocysteinase, found in Halorhodospira halophila (strain DSM 244 / SL1) (Ectothiorhodospira halophila (strain DSM 244 / SL1)).